A 392-amino-acid polypeptide reads, in one-letter code: HCLS1-binding protein 3 (392 aa).

N-acetylmethionine is present on Met-1. A phosphoserine mark is found at Ser-3, Ser-139, and Ser-194. The PX domain maps to 19-142; it reads GLDLTVPQHQ…EFLGTRSPGA (124 aa). Disordered stretches follow at residues 138–162, 174–265, and 319–364; these read RSPG…QTGN, DQVA…PLKL, and GAEP…KPQE. A compositionally biased stretch (acidic residues) spans 190-201; that stretch reads DAEESLEEEEAL. Basic residues predominate over residues 208-220; sequence RSKKPKKHPKVAV. Position 249 is a phosphoserine (Ser-249). Pro residues predominate over residues 325–335; that stretch reads KPQLKPKPPVA. The residue at position 337 (Lys-337) is an N6-acetyllysine.

In terms of assembly, binds HCLS1. Interacts with the SH3 domain of HCLS1 in vitro.

In terms of biological role, may be a modulator of IL-2 signaling. This chain is HCLS1-binding protein 3 (HS1BP3), found in Homo sapiens (Human).